Here is a 275-residue protein sequence, read N- to C-terminus: uncharacterized protein (275 aa).

Residues R20–Q22, D41–I42, D80–V81, and N107 each bind NAD(+). S160 contributes to the substrate binding site. Y173 (proton acceptor) is an active-site residue. NAD(+) is bound by residues K177 and V206–T208.

It belongs to the short-chain dehydrogenases/reductases (SDR) family.

This is an uncharacterized protein from Mycolicibacterium paratuberculosis (strain ATCC BAA-968 / K-10) (Mycobacterium paratuberculosis).